The chain runs to 714 residues: Centromere/kinetochore protein zw10 (714 aa).

The protein belongs to the ZW10 family.

Its subcellular location is the cytoplasm. The protein resides in the nucleus. It localises to the chromosome. It is found in the centromere. The protein localises to the kinetochore. In terms of biological role, required for accurate chromosome segregation. The sequence is that of Centromere/kinetochore protein zw10 (mit(1)15) from Drosophila grimshawi (Hawaiian fruit fly).